The sequence spans 140 residues: Nucleoside diphosphate kinase (140 aa).

Residues Lys11, Phe59, Arg87, Thr93, Arg104, and Asn114 each contribute to the ATP site. Catalysis depends on His117, which acts as the Pros-phosphohistidine intermediate.

It belongs to the NDK family. In terms of assembly, homotetramer. Mg(2+) is required as a cofactor.

Its subcellular location is the cytoplasm. The enzyme catalyses a 2'-deoxyribonucleoside 5'-diphosphate + ATP = a 2'-deoxyribonucleoside 5'-triphosphate + ADP. The catalysed reaction is a ribonucleoside 5'-diphosphate + ATP = a ribonucleoside 5'-triphosphate + ADP. In terms of biological role, major role in the synthesis of nucleoside triphosphates other than ATP. The ATP gamma phosphate is transferred to the NDP beta phosphate via a ping-pong mechanism, using a phosphorylated active-site intermediate. This chain is Nucleoside diphosphate kinase, found in Jannaschia sp. (strain CCS1).